The chain runs to 1097 residues: DNA-directed RNA polymerase subunit beta (1097 aa).

Residues 1073-1097 (DINPRRNTPSRPTYESLGTSEYEED) are disordered. The span at 1077–1091 (RRNTPSRPTYESLGT) shows a compositional bias: polar residues.

It belongs to the RNA polymerase beta chain family. In cyanobacteria the RNAP catalytic core is composed of 2 alpha, 1 beta, 1 beta', 1 gamma and 1 omega subunit. When a sigma factor is associated with the core the holoenzyme is formed, which can initiate transcription.

It carries out the reaction RNA(n) + a ribonucleoside 5'-triphosphate = RNA(n+1) + diphosphate. In terms of biological role, DNA-dependent RNA polymerase catalyzes the transcription of DNA into RNA using the four ribonucleoside triphosphates as substrates. The polypeptide is DNA-directed RNA polymerase subunit beta (Prochlorococcus marinus (strain MIT 9312)).